We begin with the raw amino-acid sequence, 338 residues long: Glycerol-3-phosphate dehydrogenase [NAD(P)+] (338 aa).

Residues S13, W14, and K108 each coordinate NADPH. Residues K108, G139, and S141 each coordinate sn-glycerol 3-phosphate. NADPH is bound at residue A143. Positions 194, 247, 257, 258, and 259 each coordinate sn-glycerol 3-phosphate. Catalysis depends on K194, which acts as the Proton acceptor. R258 lines the NADPH pocket. Residues V282 and E284 each contribute to the NADPH site.

This sequence belongs to the NAD-dependent glycerol-3-phosphate dehydrogenase family.

The protein localises to the cytoplasm. The catalysed reaction is sn-glycerol 3-phosphate + NAD(+) = dihydroxyacetone phosphate + NADH + H(+). It carries out the reaction sn-glycerol 3-phosphate + NADP(+) = dihydroxyacetone phosphate + NADPH + H(+). The protein operates within membrane lipid metabolism; glycerophospholipid metabolism. Catalyzes the reduction of the glycolytic intermediate dihydroxyacetone phosphate (DHAP) to sn-glycerol 3-phosphate (G3P), the key precursor for phospholipid synthesis. The protein is Glycerol-3-phosphate dehydrogenase [NAD(P)+] of Streptococcus agalactiae serotype III (strain NEM316).